Reading from the N-terminus, the 309-residue chain is Serine/threonine-protein phosphatase CPPED1 (309 aa).

Positions 47-250 (WRIGDCDSGG…FSGHYHRNAG (204 aa)) are catalytic. Residues aspartate 51, aspartate 88, asparagine 125, and histidine 244 each contribute to the a divalent metal cation site.

The protein belongs to the metallophosphoesterase superfamily. CPPED1 family. The cofactor is a divalent metal cation.

The protein localises to the cytoplasm. The catalysed reaction is O-phospho-L-seryl-[protein] + H2O = L-seryl-[protein] + phosphate. It carries out the reaction O-phospho-L-threonyl-[protein] + H2O = L-threonyl-[protein] + phosphate. Functionally, protein phosphatase involved in the dephosphorylation of AKT kinase family. This is Serine/threonine-protein phosphatase CPPED1 (cpped1) from Danio rerio (Zebrafish).